Reading from the N-terminus, the 406-residue chain is Paracaspase (406 aa).

Positions 193-374 (IGNSKYSQHR…TERKNNNIST (182 aa)) are caspase-like. Active-site residues include His-266 and Cys-311.

Belongs to the peptidase C14B family.

Its function is as follows. Not required for DIF-induced autophagic cell death and necrotic cell death. This is Paracaspase (pcp) from Dictyostelium discoideum (Social amoeba).